A 52-amino-acid polypeptide reads, in one-letter code: uncharacterized protein (52 aa).

The segment at Met1 to Phe52 is disordered. The segment covering Pro35 to His45 has biased composition (basic residues).

This is an uncharacterized protein from Saccharomyces cerevisiae (strain ATCC 204508 / S288c) (Baker's yeast).